The chain runs to 716 residues: DNA ligase (716 aa).

Residues 49 to 53 (DAAYD), 98 to 99 (SL), and E132 contribute to the NAD(+) site. K134 acts as the N6-AMP-lysine intermediate in catalysis. Residues R155, E192, K308, and K332 each coordinate NAD(+). 4 residues coordinate Zn(2+): C437, C439, C461, and C467. Residues 638 to 716 (KRNSPIATKT…EDEWLQLIGE (79 aa)) enclose the BRCT domain.

This sequence belongs to the NAD-dependent DNA ligase family. LigA subfamily. Mg(2+) serves as cofactor. The cofactor is Mn(2+).

The enzyme catalyses NAD(+) + (deoxyribonucleotide)n-3'-hydroxyl + 5'-phospho-(deoxyribonucleotide)m = (deoxyribonucleotide)n+m + AMP + beta-nicotinamide D-nucleotide.. DNA ligase that catalyzes the formation of phosphodiester linkages between 5'-phosphoryl and 3'-hydroxyl groups in double-stranded DNA using NAD as a coenzyme and as the energy source for the reaction. It is essential for DNA replication and repair of damaged DNA. The protein is DNA ligase of Bradyrhizobium sp. (strain ORS 278).